The following is a 156-amino-acid chain: Small ribosomal subunit protein uS7 (156 aa).

The protein belongs to the universal ribosomal protein uS7 family. Part of the 30S ribosomal subunit. Contacts proteins S9 and S11.

Its function is as follows. One of the primary rRNA binding proteins, it binds directly to 16S rRNA where it nucleates assembly of the head domain of the 30S subunit. Is located at the subunit interface close to the decoding center, probably blocks exit of the E-site tRNA. This is Small ribosomal subunit protein uS7 from Clostridium botulinum (strain Okra / Type B1).